The chain runs to 496 residues: E3 ubiquitin-protein ligase Hakai (496 aa).

Residues 35 to 60 (PNKIKPAPRPQRNMNRIPTKPQPGFD) form a disordered region. The RING-type; degenerate zinc-finger motif lies at 104–144 (CDKCGLPIKIYGRMIPCKHVFCYDCALMHEKKADKLCPGTL). Residues 157 to 215 (CNDPVQRIEQCARGSLFMCSIVQGCKRTYLSQRDLQAHINHRHMRASKPTARPQPEPIH) form an HYB domain region. The C2H2-type zinc-finger motif lies at 173–199 (FMCSIVQGCKRTYLSQRDLQAHINHRH). The segment covering 304 to 314 (VPIQDDSNSGA) has biased composition (polar residues). A disordered region spans residues 304-496 (VPIQDDSNSG…DQARYRPYYQ (193 aa)). Pro residues-rich tracts occupy residues 350 to 360 (APPPPPPPPIS), 380 to 397 (GPPPPMTTAPPPITPPPG), and 407 to 430 (MNHPPPGPPPQHGGPPVNAPPPHH). A compositionally biased stretch (polar residues) spans 434–449 (SSMPQFNEDQGTLSPP). Residues 464–483 (PRGPPPRMQGPPSQAPMPGP) are compositionally biased toward pro residues.

This sequence belongs to the Hakai family. Homodimer. Interacts with tyrosine-phosphorylated SRC substrates. Component of the WMM complex, a N6-methyltransferase complex composed of a catalytic subcomplex, named MAC, and of an associated subcomplex, named MACOM. Component of the MACOM subcomplex.

It is found in the nucleus speckle. It localises to the nucleus. The protein localises to the nucleoplasm. It catalyses the reaction S-ubiquitinyl-[E2 ubiquitin-conjugating enzyme]-L-cysteine + [acceptor protein]-L-lysine = [E2 ubiquitin-conjugating enzyme]-L-cysteine + N(6)-ubiquitinyl-[acceptor protein]-L-lysine.. It functions in the pathway protein modification; protein ubiquitination. In terms of biological role, E3 ubiquitin-protein ligase that mediates ubiquitination of several tyrosine-phosphorylated Src substrates. Associated component of the WMM complex, a complex that mediates N6-methyladenosine (m6A) methylation of RNAs, a modification that plays a role in the efficiency of mRNA splicing and RNA processing. The protein is E3 ubiquitin-protein ligase Hakai of Xenopus laevis (African clawed frog).